The primary structure comprises 20 residues: IIYDXVGQCDKDFYRPELPR.

The polypeptide is Unknown protein from 2D-PAGE of needles (Pinus pinaster (Maritime pine)).